We begin with the raw amino-acid sequence, 356 residues long: Dual-specificity RNA methyltransferase RlmN (356 aa).

The Proton acceptor role is filled by Glu89. The Radical SAM core domain maps to 108–341 (SHARYTICVS…CTIRESKGLD (234 aa)). Cys115 and Cys346 are disulfide-bonded. Positions 122, 126, and 129 each coordinate [4Fe-4S] cluster. Residues 172 to 173 (GE), Ser204, 227 to 229 (SLH), and Asn303 each bind S-adenosyl-L-methionine. Catalysis depends on Cys346, which acts as the S-methylcysteine intermediate.

Belongs to the radical SAM superfamily. RlmN family. [4Fe-4S] cluster serves as cofactor.

The protein localises to the cytoplasm. The catalysed reaction is adenosine(2503) in 23S rRNA + 2 reduced [2Fe-2S]-[ferredoxin] + 2 S-adenosyl-L-methionine = 2-methyladenosine(2503) in 23S rRNA + 5'-deoxyadenosine + L-methionine + 2 oxidized [2Fe-2S]-[ferredoxin] + S-adenosyl-L-homocysteine. The enzyme catalyses adenosine(37) in tRNA + 2 reduced [2Fe-2S]-[ferredoxin] + 2 S-adenosyl-L-methionine = 2-methyladenosine(37) in tRNA + 5'-deoxyadenosine + L-methionine + 2 oxidized [2Fe-2S]-[ferredoxin] + S-adenosyl-L-homocysteine. Functionally, specifically methylates position 2 of adenine 2503 in 23S rRNA and position 2 of adenine 37 in tRNAs. m2A2503 modification seems to play a crucial role in the proofreading step occurring at the peptidyl transferase center and thus would serve to optimize ribosomal fidelity. The protein is Dual-specificity RNA methyltransferase RlmN of Campylobacter jejuni subsp. jejuni serotype O:2 (strain ATCC 700819 / NCTC 11168).